An 88-amino-acid polypeptide reads, in one-letter code: UPF0250 protein bbp_432 (88 aa).

Belongs to the UPF0250 family.

This chain is UPF0250 protein bbp_432, found in Buchnera aphidicola subsp. Baizongia pistaciae (strain Bp).